Reading from the N-terminus, the 190-residue chain is Large ribosomal subunit protein uL5 (190 aa).

The protein belongs to the universal ribosomal protein uL5 family. As to quaternary structure, part of the 50S ribosomal subunit; contacts the 5S rRNA and probably tRNA. Forms a bridge to the 30S subunit in the 70S ribosome.

Functionally, this is one of the proteins that bind and probably mediate the attachment of the 5S RNA into the large ribosomal subunit, where it forms part of the central protuberance. In the 70S ribosome it contacts protein S13 of the 30S subunit (bridge B1b), connecting the 2 subunits; this bridge is implicated in subunit movement. May contact the P site tRNA; the 5S rRNA and some of its associated proteins might help stabilize positioning of ribosome-bound tRNAs. In Methanocaldococcus jannaschii (strain ATCC 43067 / DSM 2661 / JAL-1 / JCM 10045 / NBRC 100440) (Methanococcus jannaschii), this protein is Large ribosomal subunit protein uL5.